Here is a 431-residue protein sequence, read N- to C-terminus: NADH-quinone oxidoreductase subunit D 2 (431 aa).

Residues 1-37 (MSEAKGVGGIDPRATPGSAGAGERPPMGTLSPRAGEG) form a disordered region.

Belongs to the complex I 49 kDa subunit family. NDH-1 is composed of 14 different subunits. Subunits NuoB, C, D, E, F, and G constitute the peripheral sector of the complex.

The protein localises to the cell inner membrane. It carries out the reaction a quinone + NADH + 5 H(+)(in) = a quinol + NAD(+) + 4 H(+)(out). In terms of biological role, NDH-1 shuttles electrons from NADH, via FMN and iron-sulfur (Fe-S) centers, to quinones in the respiratory chain. The immediate electron acceptor for the enzyme in this species is believed to be ubiquinone. Couples the redox reaction to proton translocation (for every two electrons transferred, four hydrogen ions are translocated across the cytoplasmic membrane), and thus conserves the redox energy in a proton gradient. This chain is NADH-quinone oxidoreductase subunit D 2, found in Anaeromyxobacter sp. (strain K).